A 329-amino-acid chain; its full sequence is ATP-dependent (S)-NAD(P)H-hydrate dehydratase (329 aa).

The transit peptide at 1 to 28 (MALGPGCRAVRGCRPVLKRAFSLHKAHS) directs the protein to the mitochondrion. In terms of domain architecture, YjeF C-terminal spans 35 to 326 (ILQLVRSVVP…AEVGPAFRRL (292 aa)). Position 49 is an N6-acetyllysine (K49). Y67 is subject to Phosphotyrosine. (6S)-NADPHX is bound by residues G135 and 188-194 (NHVEFGR). ATP-binding positions include 228–232 (KGEQD) and 247–256 (GSGRRCGGQG). D257 provides a ligand contact to (6S)-NADPHX.

Belongs to the NnrD/CARKD family. Requires Mg(2+) as cofactor.

It localises to the mitochondrion. The enzyme catalyses (6S)-NADHX + ATP = ADP + phosphate + NADH + H(+). It carries out the reaction (6S)-NADPHX + ATP = ADP + phosphate + NADPH + H(+). Catalyzes the dehydration of the S-form of NAD(P)HX at the expense of ATP, which is converted to ADP. Together with NAD(P)HX epimerase, which catalyzes the epimerization of the S- and R-forms, the enzyme allows the repair of both epimers of NAD(P)HX, a damaged form of NAD(P)H that is a result of enzymatic or heat-dependent hydration. The polypeptide is ATP-dependent (S)-NAD(P)H-hydrate dehydratase (Bos taurus (Bovine)).